Consider the following 95-residue polypeptide: Large ribosomal subunit protein uL23cz/uL23cy (95 aa).

It belongs to the universal ribosomal protein uL23 family. Part of the 50S ribosomal subunit.

Its subcellular location is the plastid. The protein localises to the chloroplast. Functionally, binds to 23S rRNA. This chain is Large ribosomal subunit protein uL23cz/uL23cy (rpl23-A), found in Amborella trichopoda.